Here is a 391-residue protein sequence, read N- to C-terminus: Alkanesulfonate monooxygenase (391 aa).

The protein belongs to the SsuD family.

It catalyses the reaction an alkanesulfonate + FMNH2 + O2 = an aldehyde + FMN + sulfite + H2O + 2 H(+). In terms of biological role, catalyzes the desulfonation of aliphatic sulfonates. The protein is Alkanesulfonate monooxygenase of Rhodopseudomonas palustris (strain TIE-1).